We begin with the raw amino-acid sequence, 211 residues long: tRNA (guanine-N(7)-)-methyltransferase (211 aa).

Residues Glu43, Glu68, Asp95, and Asp117 each contribute to the S-adenosyl-L-methionine site. Asp117 is a catalytic residue. Residues Lys121, Asp153, and Thr190 to Glu193 each bind substrate.

It belongs to the class I-like SAM-binding methyltransferase superfamily. TrmB family.

The catalysed reaction is guanosine(46) in tRNA + S-adenosyl-L-methionine = N(7)-methylguanosine(46) in tRNA + S-adenosyl-L-homocysteine. The protein operates within tRNA modification; N(7)-methylguanine-tRNA biosynthesis. In terms of biological role, catalyzes the formation of N(7)-methylguanine at position 46 (m7G46) in tRNA. The polypeptide is tRNA (guanine-N(7)-)-methyltransferase (Staphylococcus carnosus (strain TM300)).